We begin with the raw amino-acid sequence, 714 residues long: Forkhead box protein P2 (714 aa).

Residues Met1–Asp28 show a composition bias toward polar residues. Disordered regions lie at residues Met1 to Ser45 and Asp280 to Ser338. The segment covering Thr291–Ser304 has biased composition (low complexity). Residues Ser314 to Leu323 show a composition bias toward polar residues. Positions Ala325–Gly336 are enriched in basic and acidic residues. The segment at Gly345–His370 adopts a C2H2-type zinc-finger fold. The leucine-zipper stretch occupies residues Val387 to Leu408. The tract at residues Pro421 to Val425 is CTBP1-binding. The segment covering Thr437–Gln458 has biased composition (low complexity). Positions Thr437–Thr464 are disordered. The fork-head DNA-binding region spans Arg503 to Leu593. Disordered stretches follow at residues Leu648–Ile667 and Val677–Glu714. Acidic residues predominate over residues Leu698–Glu714.

In terms of assembly, forms homodimers and heterodimers with FOXP1 and FOXP4. Dimerization is required for DNA-binding. Interacts with CTBP1. Interacts with FOXP1. Interacts with TBR1. Interacts with ZMYM2. Highest expression in lung. Lower expression in spleen, skeletal muscle, brain, kidney and small intestine.

Its subcellular location is the nucleus. Functionally, transcriptional repressor that may play a role in the specification and differentiation of lung epithelium. May also play a role in developing neural, gastrointestinal and cardiovascular tissues. Can act with CTBP1 to synergistically repress transcription but CTPBP1 is not essential. Plays a role in synapse formation by regulating SRPX2 levels. This is Forkhead box protein P2 (Foxp2) from Mus musculus (Mouse).